A 285-amino-acid polypeptide reads, in one-letter code: 2-dehydro-3-deoxyphosphooctonate aldolase (285 aa).

This sequence belongs to the KdsA family.

It localises to the cytoplasm. The enzyme catalyses D-arabinose 5-phosphate + phosphoenolpyruvate + H2O = 3-deoxy-alpha-D-manno-2-octulosonate-8-phosphate + phosphate. It functions in the pathway carbohydrate biosynthesis; 3-deoxy-D-manno-octulosonate biosynthesis; 3-deoxy-D-manno-octulosonate from D-ribulose 5-phosphate: step 2/3. The protein operates within bacterial outer membrane biogenesis; lipopolysaccharide biosynthesis. The sequence is that of 2-dehydro-3-deoxyphosphooctonate aldolase from Acidovorax sp. (strain JS42).